We begin with the raw amino-acid sequence, 361 residues long: Glutaminyl-peptide cyclotransferase (361 aa).

A signal peptide spans 1–28; the sequence is MAGGRHRRVVGTLHLLLLVAALPWASRG. Asn-49 is a glycosylation site (N-linked (GlcNAc...) asparagine). A disulfide bond links Cys-139 and Cys-164. Residue Asp-159 participates in Zn(2+) binding. Glu-201 functions as the Proton acceptor in the catalytic mechanism. Residue Glu-202 participates in Zn(2+) binding. Catalysis depends on Asp-248, which acts as the Proton acceptor. The N-linked (GlcNAc...) asparagine glycan is linked to Asn-296. His-330 serves as a coordination point for Zn(2+).

It belongs to the glutaminyl-peptide cyclotransferase family.

It localises to the secreted. It carries out the reaction N-terminal L-glutaminyl-[peptide] = N-terminal 5-oxo-L-prolyl-[peptide] + NH4(+). Functionally, responsible for the biosynthesis of pyroglutamyl peptides. Has a bias against acidic and tryptophan residues adjacent to the N-terminal glutaminyl residue and a lack of importance of chain length after the second residue. Also catalyzes N-terminal pyroglutamate formation. In vitro, catalyzes pyroglutamate formation of N-terminally truncated form of APP amyloid-beta peptides [Glu-3]-amyloid-beta. May be involved in the N-terminal pyroglutamate formation of several amyloid-related plaque-forming peptides. This chain is Glutaminyl-peptide cyclotransferase (QPCT), found in Homo sapiens (Human).